The chain runs to 417 residues: Serine hydroxymethyltransferase 1 (417 aa).

Residues L121 and 125-127 (GHL) contribute to the (6S)-5,6,7,8-tetrahydrofolate site. An N6-(pyridoxal phosphate)lysine modification is found at K229. 354–356 (SPF) provides a ligand contact to (6S)-5,6,7,8-tetrahydrofolate.

The protein belongs to the SHMT family. Homodimer. The cofactor is pyridoxal 5'-phosphate.

The protein resides in the cytoplasm. It catalyses the reaction (6R)-5,10-methylene-5,6,7,8-tetrahydrofolate + glycine + H2O = (6S)-5,6,7,8-tetrahydrofolate + L-serine. Its pathway is one-carbon metabolism; tetrahydrofolate interconversion. It functions in the pathway amino-acid biosynthesis; glycine biosynthesis; glycine from L-serine: step 1/1. Catalyzes the reversible interconversion of serine and glycine with tetrahydrofolate (THF) serving as the one-carbon carrier. This reaction serves as the major source of one-carbon groups required for the biosynthesis of purines, thymidylate, methionine, and other important biomolecules. Also exhibits THF-independent aldolase activity toward beta-hydroxyamino acids, producing glycine and aldehydes, via a retro-aldol mechanism. The polypeptide is Serine hydroxymethyltransferase 1 (Pseudomonas syringae pv. syringae (strain B728a)).